We begin with the raw amino-acid sequence, 45 residues long: Large ribosomal subunit protein bL34 (45 aa).

The span at 1 to 20 (MSKRTYQPNKRKRLKTHGFR) shows a compositional bias: basic residues. Positions 1 to 45 (MSKRTYQPNKRKRLKTHGFRSRMSTASGRRIISCRRRKNRETLTA) are disordered.

It belongs to the bacterial ribosomal protein bL34 family.

The protein is Large ribosomal subunit protein bL34 of Tropheryma whipplei (strain Twist) (Whipple's bacillus).